The chain runs to 342 residues: Heat-inducible transcription repressor HrcA (342 aa).

Belongs to the HrcA family.

Negative regulator of class I heat shock genes (grpE-dnaK-dnaJ and groELS operons). Prevents heat-shock induction of these operons. The protein is Heat-inducible transcription repressor HrcA of Shouchella clausii (strain KSM-K16) (Alkalihalobacillus clausii).